Reading from the N-terminus, the 282-residue chain is ATP synthase gamma chain (282 aa).

It belongs to the ATPase gamma chain family. F-type ATPases have 2 components, CF(1) - the catalytic core - and CF(0) - the membrane proton channel. CF(1) has five subunits: alpha(3), beta(3), gamma(1), delta(1), epsilon(1). CF(0) has three main subunits: a, b and c.

It localises to the cell membrane. In terms of biological role, produces ATP from ADP in the presence of a proton gradient across the membrane. The gamma chain is believed to be important in regulating ATPase activity and the flow of protons through the CF(0) complex. The polypeptide is ATP synthase gamma chain (Clostridium botulinum (strain Langeland / NCTC 10281 / Type F)).